We begin with the raw amino-acid sequence, 291 residues long: MLTGSLVAIVTPMLEDGSVDFEALDRLVDFHIESGTSGIVAVGTTGESAALAVEEHLQVVAAVVKRAAGRIKVIAGAGANSTHEAIDLTRESRRLGADQVLSVVPYYNKPTQEGMYRHFRAIAESTDIPVILYNVPGRTVADMCNDTVLRLAEIPNIIGLKDATADLARCCDLVKRAPKDFALYTGDDATAMAFMLCGGHGVISVTANVAPRQMAELCRAAIAGDVQAARRINDPLQGLHKDLFCEANPIPVKWALERMGRIPAGIRLPLTRLSDAGQSKVEAALKAANLI.

Position 45 (Thr45) interacts with pyruvate. The Proton donor/acceptor role is filled by Tyr133. The Schiff-base intermediate with substrate role is filled by Lys161. Pyruvate is bound at residue Ile203.

Belongs to the DapA family. Homotetramer; dimer of dimers.

It is found in the cytoplasm. The enzyme catalyses L-aspartate 4-semialdehyde + pyruvate = (2S,4S)-4-hydroxy-2,3,4,5-tetrahydrodipicolinate + H2O + H(+). It functions in the pathway amino-acid biosynthesis; L-lysine biosynthesis via DAP pathway; (S)-tetrahydrodipicolinate from L-aspartate: step 3/4. Functionally, catalyzes the condensation of (S)-aspartate-beta-semialdehyde [(S)-ASA] and pyruvate to 4-hydroxy-tetrahydrodipicolinate (HTPA). This chain is 4-hydroxy-tetrahydrodipicolinate synthase, found in Laribacter hongkongensis (strain HLHK9).